We begin with the raw amino-acid sequence, 236 residues long: Adenosine 5'-phosphosulfate reductase 2 (236 aa).

[4Fe-4S] cluster is bound by residues C122, C123, C205, and C208. A disordered region spans residues 216-236 (NDERAGRWAGREKTECGLHQE). Catalysis depends on C231, which acts as the Nucleophile; cysteine thiosulfonate intermediate.

The protein belongs to the PAPS reductase family. CysH subfamily. Requires [4Fe-4S] cluster as cofactor.

Its subcellular location is the cytoplasm. It carries out the reaction [thioredoxin]-disulfide + sulfite + AMP + 2 H(+) = adenosine 5'-phosphosulfate + [thioredoxin]-dithiol. The protein operates within sulfur metabolism; hydrogen sulfide biosynthesis; sulfite from sulfate. Catalyzes the formation of sulfite from adenosine 5'-phosphosulfate (APS) using thioredoxin as an electron donor. In Bacillus subtilis (strain 168), this protein is Adenosine 5'-phosphosulfate reductase 2.